A 215-amino-acid polypeptide reads, in one-letter code: Adenylate kinase (215 aa).

10–15 contributes to the ATP binding site; sequence GAGKGT. Positions 30–59 are NMP; sequence STGDMLRSAIKSGSELGKKAKQVMDAGQLV. Residues threonine 31, arginine 36, 57–59, 85–88, and glutamine 92 each bind AMP; these read QLV and GFPR. Residues 122–159 are LID; that stretch reads GRRVHPGSGRVYHVEHNPPKVEGKDDETGEDLVVRPDD. Residues arginine 123 and 132–133 each bind ATP; that span reads VY. The segment at 128-151 is disordered; it reads GSGRVYHVEHNPPKVEGKDDETGE. Basic and acidic residues predominate over residues 133 to 144; the sequence is YHVEHNPPKVEG. AMP is bound by residues arginine 156 and arginine 167. Residues 195 to 215 are disordered; sequence KIDGTQPVERVSEQLGDLLRK. Residue glutamine 200 participates in ATP binding.

It belongs to the adenylate kinase family. Monomer.

Its subcellular location is the cytoplasm. The catalysed reaction is AMP + ATP = 2 ADP. It participates in purine metabolism; AMP biosynthesis via salvage pathway; AMP from ADP: step 1/1. Functionally, catalyzes the reversible transfer of the terminal phosphate group between ATP and AMP. Plays an important role in cellular energy homeostasis and in adenine nucleotide metabolism. The protein is Adenylate kinase of Idiomarina loihiensis (strain ATCC BAA-735 / DSM 15497 / L2-TR).